The sequence spans 436 residues: tRNA(Ile)-lysidine synthase (436 aa).

An ATP-binding site is contributed by serine 25–serine 30.

It belongs to the tRNA(Ile)-lysidine synthase family.

It localises to the cytoplasm. The enzyme catalyses cytidine(34) in tRNA(Ile2) + L-lysine + ATP = lysidine(34) in tRNA(Ile2) + AMP + diphosphate + H(+). In terms of biological role, ligates lysine onto the cytidine present at position 34 of the AUA codon-specific tRNA(Ile) that contains the anticodon CAU, in an ATP-dependent manner. Cytidine is converted to lysidine, thus changing the amino acid specificity of the tRNA from methionine to isoleucine. This is tRNA(Ile)-lysidine synthase from Serratia proteamaculans (strain 568).